Reading from the N-terminus, the 155-residue chain is 3-hydroxyacyl-[acyl-carrier-protein] dehydratase FabZ (155 aa).

The active site involves His57.

The protein belongs to the thioester dehydratase family. FabZ subfamily.

It localises to the cytoplasm. The catalysed reaction is a (3R)-hydroxyacyl-[ACP] = a (2E)-enoyl-[ACP] + H2O. In terms of biological role, involved in unsaturated fatty acids biosynthesis. Catalyzes the dehydration of short chain beta-hydroxyacyl-ACPs and long chain saturated and unsaturated beta-hydroxyacyl-ACPs. This Cereibacter sphaeroides (strain ATCC 17025 / ATH 2.4.3) (Rhodobacter sphaeroides) protein is 3-hydroxyacyl-[acyl-carrier-protein] dehydratase FabZ.